The sequence spans 246 residues: Ribonuclease PH (246 aa).

A disordered region spans residues 1–33; the sequence is MTPPKLPVREGRDALTPRPVSVQRGVNPHAPGS. Phosphate is bound by residues Arg-90 and 128–130; that span reads GTR.

It belongs to the RNase PH family. In terms of assembly, homohexameric ring arranged as a trimer of dimers.

It catalyses the reaction tRNA(n+1) + phosphate = tRNA(n) + a ribonucleoside 5'-diphosphate. In terms of biological role, phosphorolytic 3'-5' exoribonuclease that plays an important role in tRNA 3'-end maturation. Removes nucleotide residues following the 3'-CCA terminus of tRNAs; can also add nucleotides to the ends of RNA molecules by using nucleoside diphosphates as substrates, but this may not be physiologically important. Probably plays a role in initiation of 16S rRNA degradation (leading to ribosome degradation) during starvation. The chain is Ribonuclease PH from Deinococcus radiodurans (strain ATCC 13939 / DSM 20539 / JCM 16871 / CCUG 27074 / LMG 4051 / NBRC 15346 / NCIMB 9279 / VKM B-1422 / R1).